Reading from the N-terminus, the 327-residue chain is Ribosomal RNA small subunit methyltransferase H (327 aa).

Residues 37-39, Asp55, Phe82, Asp99, and Gln106 contribute to the S-adenosyl-L-methionine site; that span reads GGY. The interval 303-327 is disordered; it reads IATRTDAPAQPVAPETLGLPQLEGF.

Belongs to the methyltransferase superfamily. RsmH family.

Its subcellular location is the cytoplasm. The enzyme catalyses cytidine(1402) in 16S rRNA + S-adenosyl-L-methionine = N(4)-methylcytidine(1402) in 16S rRNA + S-adenosyl-L-homocysteine + H(+). In terms of biological role, specifically methylates the N4 position of cytidine in position 1402 (C1402) of 16S rRNA. The sequence is that of Ribosomal RNA small subunit methyltransferase H from Jannaschia sp. (strain CCS1).